The following is a 252-amino-acid chain: Ribosomal RNA small subunit methyltransferase J (252 aa).

Residues 101–102 (RD), 117–118 (ER), 153–154 (SS), and aspartate 171 each bind S-adenosyl-L-methionine.

It belongs to the methyltransferase superfamily. RsmJ family.

The protein resides in the cytoplasm. The enzyme catalyses guanosine(1516) in 16S rRNA + S-adenosyl-L-methionine = N(2)-methylguanosine(1516) in 16S rRNA + S-adenosyl-L-homocysteine + H(+). Specifically methylates the guanosine in position 1516 of 16S rRNA. The sequence is that of Ribosomal RNA small subunit methyltransferase J from Pseudoalteromonas translucida (strain TAC 125).